Here is a 532-residue protein sequence, read N- to C-terminus: FRIGIDA-like protein 4b (532 aa).

The protein belongs to the Frigida family. As to expression, expressed in leaves, shoot apex, flowers and during seed development.

The sequence is that of FRIGIDA-like protein 4b (FRL4B) from Arabidopsis thaliana (Mouse-ear cress).